The sequence spans 597 residues: Arginine--tRNA ligase (597 aa).

The short motif at 138–148 is the 'HIGH' region element; that stretch reads ANPTGPMHVGH.

The protein belongs to the class-I aminoacyl-tRNA synthetase family. As to quaternary structure, monomer.

The protein resides in the cytoplasm. The enzyme catalyses tRNA(Arg) + L-arginine + ATP = L-arginyl-tRNA(Arg) + AMP + diphosphate. This is Arginine--tRNA ligase from Nitrobacter hamburgensis (strain DSM 10229 / NCIMB 13809 / X14).